We begin with the raw amino-acid sequence, 307 residues long: Dioxygenase swnH1 (307 aa).

3 residues coordinate Fe cation: histidine 149, aspartate 151, and histidine 227.

Belongs to the PhyH family. Homodimer. Fe cation serves as cofactor.

It functions in the pathway mycotoxin biosynthesis. Dioxygenase; part of the gene cluster that mediates the biosynthesis of swainsonine (SW), a cytotoxic fungal alkaloid and a potential cancer therapy drug. Swainsonine production occurs via a multibranched pathway and is dispensable for fungal colonization of plants and infection of insect hosts. The first step of swainsonine biosynthesis is the production of the precursor pipecolic acid (PA) via conversion of L-lysine (Lys) to 1-piperideine-6-carboxylate (P6C) by the aminotransferase swnA, the latter being further reduced to PA by the reductase swnR. PA can be converted from lysine by both the SW biosynthetic cluster and the unclustered genes such as lysine cyclodeaminase. The PKS-NRPS hybrid synthetase swnK uptakes and condensates PA and malonyl-CoA with and without skipping of the ketoreductase (KR) domain in order to produce 3 intermediates, 1-oxoindolizidine, (1S)-1-hydroxyindolizin, and (1R)-1-hydroxyindolizine; with the transisomer (1S)-1-hydroxyindolizin being predominant. The terminal thioester reductase (TE) domain of swnK is involved in reduction of the thioester bond to release the intermediate aldehydes. The oxidoreductase swnN could contribute to the reduction of 1-oxoindolizidine to (1S)-1-hydroxyindolizin and (1R)-1-hydroxyindolizine, contributing to the major route of SW production. The dioxygenase swnH2 would be responsible for the oxidization of (1R)-1-hydroxyindolizine into (1R,2S)-1,2-dihydroxyindolizine and of (1S)-1-hydroxyindolizin to yield both (1R,2S)-1,2-dihydroxyindolizine and (1S,2S)-1,2-dihydroxyindolizine. The dioxygenase swnH1 then performs the conversion of the 1,2-dihydroxyindolizine epimers to SW. The chain is Dioxygenase swnH1 from Metarhizium robertsii (strain ARSEF 23 / ATCC MYA-3075) (Metarhizium anisopliae (strain ARSEF 23)).